Consider the following 186-residue polypeptide: Casparian strip membrane protein 6 (186 aa).

At 1 to 23 the chain is on the cytoplasmic side; that stretch reads MKAGPIELGEGKSSAPKAAVNRG. The helical transmembrane segment at 24 to 44 threads the bilayer; the sequence is VAILDFILRILAFIGTLGSAI. The Extracellular segment spans residues 45–73; the sequence is SMATTNETLPFFTQFIRFRAEYDDLPTFT. N-linked (GlcNAc...) asparagine glycosylation is present at N50. Residues 74-94 form a helical membrane-spanning segment; it reads FFVVANGVVSAYLLFSLPFSI. Topologically, residues 95–106 are cytoplasmic; sequence FNIVRSKAQNSR. The helical transmembrane segment at 107–127 threads the bilayer; sequence ILLIILDTAMLGLLSAGASAA. Residues 128–160 lie on the Extracellular side of the membrane; sequence AAIVYLAHQGNVRTNWSAICQQFNSFCERISGS. N-linked (GlcNAc...) asparagine glycosylation is present at N142. The chain crosses the membrane as a helical span at residues 161–181; that stretch reads LIGSFIGVVVFILLISLSAVA. The Cytoplasmic portion of the chain corresponds to 182-186; it reads LSRHK.

It belongs to the Casparian strip membrane proteins (CASP) family. As to quaternary structure, homodimer and heterodimers.

It is found in the cell membrane. Functionally, regulates membrane-cell wall junctions and localized cell wall deposition. Required for establishment of the Casparian strip membrane domain (CSD) and the subsequent formation of Casparian strips, a cell wall modification of the root endodermis that determines an apoplastic barrier between the intraorganismal apoplasm and the extraorganismal apoplasm and prevents lateral diffusion. This Populus trichocarpa (Western balsam poplar) protein is Casparian strip membrane protein 6.